The sequence spans 172 residues: Capsid protein (172 aa).

Positions 1 to 26 are disordered; the sequence is MASKWNWSGTKGRRTPRRPYGRPYKS. Basic residues predominate over residues 11–20; that stretch reads KGRRTPRRPY.

Belongs to the nanoviridae capsid protein family.

The protein resides in the virion. The sequence is that of Capsid protein (DNA-S) from Faba bean necrotic yellows virus (isolate Syrian SV292-88) (FBNYV).